A 596-amino-acid chain; its full sequence is Elongation factor 4 (596 aa).

The region spanning 2–183 is the tr-type G domain; sequence KNIRNFSIIA…TIITKIPAPK (182 aa). Residues 14 to 19 and 130 to 133 each bind GTP; these read DHGKST and NKID.

Belongs to the TRAFAC class translation factor GTPase superfamily. Classic translation factor GTPase family. LepA subfamily.

The protein resides in the cell inner membrane. It carries out the reaction GTP + H2O = GDP + phosphate + H(+). Its function is as follows. Required for accurate and efficient protein synthesis under certain stress conditions. May act as a fidelity factor of the translation reaction, by catalyzing a one-codon backward translocation of tRNAs on improperly translocated ribosomes. Back-translocation proceeds from a post-translocation (POST) complex to a pre-translocation (PRE) complex, thus giving elongation factor G a second chance to translocate the tRNAs correctly. Binds to ribosomes in a GTP-dependent manner. This chain is Elongation factor 4, found in Campylobacter lari (strain RM2100 / D67 / ATCC BAA-1060).